The primary structure comprises 591 residues: V-type ATP synthase alpha chain (591 aa).

An ATP-binding site is contributed by 242–249 (GPFGAGKT).

The protein belongs to the ATPase alpha/beta chains family.

It carries out the reaction ATP + H2O + 4 H(+)(in) = ADP + phosphate + 5 H(+)(out). In terms of biological role, produces ATP from ADP in the presence of a proton gradient across the membrane. The V-type alpha chain is a catalytic subunit. In Chlamydia muridarum (strain MoPn / Nigg), this protein is V-type ATP synthase alpha chain (atpA).